A 630-amino-acid polypeptide reads, in one-letter code: MDLTQIQNPSFLKDMSISELEGLSEDIRKFLIEELSQTGGHIAPNLGVVELTIALHKLFDSPKDKFLWDVGHQSYVHKILTGRAKEFGTLRQYQGLCGFPKRCESEHDVWETGHSSTSLSAAMGMALARDLKKTKEYVIPIIGDGALTGGMALEALNHIGHEKTDMIVILNDNEMSIAPNVGALHNVLGRLRTAGKYHWVKDELEYILKKIPAVGGKVAATAEKIKDSLKYLLVSGVFFEELGFTYLGPVDGHDYEKLFETLQYAKKTKGPVLVHVITKKGKGYKPAESDVIGTWHGTGPYKIESGDFVKPKEVAPAWSAVVSETVLKLARTDERIVAITPAMPVGSKLEKFQKEFPDRMIDVGIAEQHATTMAAGMATQGMKPFLAIYSTFLQRAYDQVVHDICRQNLNVFIGIDRSGLVGADGETHQGVFDISFLRHLPNMVLMMPKDENEGQHLVYTAMQYEDGPIALRYARGNGLGVHMDEELKAIPIGSWETLKEGTQAAILTFGTTIPMAMEAAERLEKAGVSVKVVNARFIKPMDEAYLHDLLGKNIPILTIEEACLIGGFGTGVVEFASENGYHSALVERMGIPDRFIEHGSVTKLLEEIGLTTDAVVDRIHTMIPSKQKRA.

Thiamine diphosphate is bound by residues His-72 and 113-115; that span reads GHS. Asp-144 lines the Mg(2+) pocket. Residues 145-146, Asn-173, Tyr-284, and Glu-367 contribute to the thiamine diphosphate site; that span reads GA. Residue Asn-173 participates in Mg(2+) binding.

Belongs to the transketolase family. DXPS subfamily. As to quaternary structure, homodimer. Mg(2+) serves as cofactor. Requires thiamine diphosphate as cofactor.

The catalysed reaction is D-glyceraldehyde 3-phosphate + pyruvate + H(+) = 1-deoxy-D-xylulose 5-phosphate + CO2. Its pathway is metabolic intermediate biosynthesis; 1-deoxy-D-xylulose 5-phosphate biosynthesis; 1-deoxy-D-xylulose 5-phosphate from D-glyceraldehyde 3-phosphate and pyruvate: step 1/1. In terms of biological role, catalyzes the acyloin condensation reaction between C atoms 2 and 3 of pyruvate and glyceraldehyde 3-phosphate to yield 1-deoxy-D-xylulose-5-phosphate (DXP). The polypeptide is 1-deoxy-D-xylulose-5-phosphate synthase (Bacillus cereus (strain ATCC 10987 / NRS 248)).